Consider the following 406-residue polypeptide: MTVLYDEIMVRYGELSTKGKNRGYFINRLAKNIREVLADMPELKITAVRDRAHIELNGADYAEVSNRLTKVFGIQNFSPSIKVEKSMPIIKKEVVALFKEIYSEGQTFKIATRRADHNFELDSTELNIALGDVVFDNFSYAKVQMKKPDITLRVEIRQDATYLSFEDIKGAGGMPVGTAGRGHLMLSGGIDSPVAGYLALKRGVEIEAVHFASPPYTSPGALKKAKDLAAKLTVFGGAITFIEVPFTEIQEEIKAKAPQAYLMTITRRFMMRVVDRVREERGGKVIINGESLGQVASQTLGSMSAINEVTNTPVIRPVVTMDKNEIIEIAEKIDTFNLSILPFEDCCTVFAPPSPKTNPKLENCIQYEKRMDVEGMVDRAVKGIMLTTIAGENWDQTEEEEFADFL.

A THUMP domain is found at 62–167 (AEVSNRLTKV…QDATYLSFED (106 aa)). ATP-binding positions include 185–186 (ML), 210–211 (HF), R267, G289, and Q298.

This sequence belongs to the ThiI family.

It localises to the cytoplasm. It catalyses the reaction [ThiI sulfur-carrier protein]-S-sulfanyl-L-cysteine + a uridine in tRNA + 2 reduced [2Fe-2S]-[ferredoxin] + ATP + H(+) = [ThiI sulfur-carrier protein]-L-cysteine + a 4-thiouridine in tRNA + 2 oxidized [2Fe-2S]-[ferredoxin] + AMP + diphosphate. The enzyme catalyses [ThiS sulfur-carrier protein]-C-terminal Gly-Gly-AMP + S-sulfanyl-L-cysteinyl-[cysteine desulfurase] + AH2 = [ThiS sulfur-carrier protein]-C-terminal-Gly-aminoethanethioate + L-cysteinyl-[cysteine desulfurase] + A + AMP + 2 H(+). Its pathway is cofactor biosynthesis; thiamine diphosphate biosynthesis. Catalyzes the ATP-dependent transfer of a sulfur to tRNA to produce 4-thiouridine in position 8 of tRNAs, which functions as a near-UV photosensor. Also catalyzes the transfer of sulfur to the sulfur carrier protein ThiS, forming ThiS-thiocarboxylate. This is a step in the synthesis of thiazole, in the thiamine biosynthesis pathway. The sulfur is donated as persulfide by IscS. The chain is Probable tRNA sulfurtransferase from Lactococcus lactis subsp. cremoris (strain MG1363).